The chain runs to 177 residues: Thymidine kinase (177 aa).

11–18 serves as a coordination point for ATP; that stretch reads GPMFSGKS. The Proton acceptor role is filled by Glu-83. Phe-113 contacts substrate. Zn(2+) is bound by residues Cys-138 and Cys-141. Residue 157-161 coordinates substrate; it reads IEIIG. Zn(2+) is bound by residues Cys-170 and Cys-173.

The protein belongs to the thymidine kinase family. Homotetramer. Two molecules of substrate bind to each enzyme tetramer.

It carries out the reaction thymidine + ATP = dTMP + ADP + H(+). Phosphorylates thymidine and thymidine analogs, such as azidothymidine (AZT). Part of the salvage pathway for pyrimidine deoxyribonucleotide synthesis. This is Thymidine kinase (OPG101) from Variola virus.